The primary structure comprises 238 residues: Ribonuclease PH (238 aa).

Phosphate-binding positions include arginine 86 and glycine 124 to arginine 126.

Belongs to the RNase PH family. As to quaternary structure, homohexameric ring arranged as a trimer of dimers.

The enzyme catalyses tRNA(n+1) + phosphate = tRNA(n) + a ribonucleoside 5'-diphosphate. Its function is as follows. Phosphorolytic 3'-5' exoribonuclease that plays an important role in tRNA 3'-end maturation. Removes nucleotide residues following the 3'-CCA terminus of tRNAs; can also add nucleotides to the ends of RNA molecules by using nucleoside diphosphates as substrates, but this may not be physiologically important. Probably plays a role in initiation of 16S rRNA degradation (leading to ribosome degradation) during starvation. The sequence is that of Ribonuclease PH from Mesorhizobium japonicum (strain LMG 29417 / CECT 9101 / MAFF 303099) (Mesorhizobium loti (strain MAFF 303099)).